Reading from the N-terminus, the 45-residue chain is uncharacterized protein (45 aa).

This is an uncharacterized protein from Saccharomyces cerevisiae (strain ATCC 204508 / S288c) (Baker's yeast).